Here is a 186-residue protein sequence, read N- to C-terminus: Guanylate kinase (186 aa).

In terms of domain architecture, Guanylate kinase-like spans Gly-5–Gly-183. Gly-12–Gly-19 contacts ATP.

This sequence belongs to the guanylate kinase family.

Its subcellular location is the cytoplasm. It carries out the reaction GMP + ATP = GDP + ADP. Functionally, essential for recycling GMP and indirectly, cGMP. This chain is Guanylate kinase, found in Prochlorococcus marinus (strain NATL2A).